The sequence spans 279 residues: UPF0276 protein SO_2008 (279 aa).

The protein belongs to the UPF0276 family.

This Shewanella oneidensis (strain ATCC 700550 / JCM 31522 / CIP 106686 / LMG 19005 / NCIMB 14063 / MR-1) protein is UPF0276 protein SO_2008.